The chain runs to 474 residues: Ankyrin repeat, SAM and basic leucine zipper domain-containing protein 1 (474 aa).

The disordered stretch occupies residues methionine 1 to arginine 31. Phosphoserine is present on residues serine 16, serine 17, and serine 19. ANK repeat units follow at residues glutamate 43–serine 72, phenylalanine 76–phenylalanine 105, aspartate 108–alanine 142, lysine 146–alanine 175, asparagine 179–leucine 208, and aspartate 212–glycine 241. In terms of domain architecture, SAM spans serine 270–glutamine 333.

Interacts with DDX4, PIWIL1, RANBP9 and TDRD1.

The protein resides in the cytoplasm. In terms of biological role, plays a central role during spermatogenesis by repressing transposable elements and preventing their mobilization, which is essential for the germline integrity. Acts via the piRNA metabolic process, which mediates the repression of transposable elements during meiosis by forming complexes composed of piRNAs and Piwi proteins and governs the methylation and subsequent repression of transposons. Its association with pi-bodies suggests a participation in the primary piRNAs metabolic process. Required prior to the pachytene stage to facilitate the production of multiple types of piRNAs, including those associated with repeats involved in the regulation of retrotransposons. May act by mediating protein-protein interactions during germ cell maturation. This is Ankyrin repeat, SAM and basic leucine zipper domain-containing protein 1 (ASZ1) from Ornithorhynchus anatinus (Duckbill platypus).